A 220-amino-acid chain; its full sequence is Demethylmenaquinone methyltransferase (220 aa).

S-adenosyl-L-methionine contacts are provided by residues Thr-47, Asp-67, and 93-94; that span reads DA.

Belongs to the class I-like SAM-binding methyltransferase superfamily. MenG/UbiE family.

The enzyme catalyses a 2-demethylmenaquinol + S-adenosyl-L-methionine = a menaquinol + S-adenosyl-L-homocysteine + H(+). The protein operates within quinol/quinone metabolism; menaquinone biosynthesis; menaquinol from 1,4-dihydroxy-2-naphthoate: step 2/2. Functionally, methyltransferase required for the conversion of demethylmenaquinol (DMKH2) to menaquinol (MKH2). This is Demethylmenaquinone methyltransferase from Thermus thermophilus (strain ATCC BAA-163 / DSM 7039 / HB27).